The following is a 155-amino-acid chain: Ciliary microtubule inner protein 2C (155 aa).

This sequence belongs to the CIMIP2 family.

The protein resides in the cytoplasm. It is found in the cytoskeleton. It localises to the cilium axoneme. Functionally, microtubule inner protein (MIP) part of the dynein-decorated doublet microtubules (DMTs) in cilia axoneme, which is required for motile cilia beating. The protein is Ciliary microtubule inner protein 2C (cimip2ca) of Xenopus laevis (African clawed frog).